A 597-amino-acid polypeptide reads, in one-letter code: Cytosolic Fe-S cluster assembly factor NAR1 (597 aa).

Cysteine 20 contributes to the [4Fe-4S] cluster binding site. Residues 25-46 (ESLPQKESQSENPYEVTKEDKV) are disordered. [4Fe-4S] cluster contacts are provided by cysteine 61, cysteine 64, cysteine 67, cysteine 208, and cysteine 263. Residues 422–448 (VSRLPGAKPQAVTSSANRRQPMSRNAA) are disordered. Residues 432-444 (AVTSSANRRQPMS) show a composition bias toward polar residues. The [4Fe-4S] cluster site is built by cysteine 464 and cysteine 468.

Belongs to the NARF family.

Component of the cytosolic Fe/S protein assembly machinery. Required for maturation of extramitochondrial Fe/S proteins. May play a role in the transfer of pre-assembled Fe/S clusters to target apoproteins. The sequence is that of Cytosolic Fe-S cluster assembly factor NAR1 (NAR1) from Neosartorya fischeri (strain ATCC 1020 / DSM 3700 / CBS 544.65 / FGSC A1164 / JCM 1740 / NRRL 181 / WB 181) (Aspergillus fischerianus).